Here is a 244-residue protein sequence, read N- to C-terminus: 3-deoxy-manno-octulosonate cytidylyltransferase (244 aa).

The protein belongs to the KdsB family.

It is found in the cytoplasm. The enzyme catalyses 3-deoxy-alpha-D-manno-oct-2-ulosonate + CTP = CMP-3-deoxy-beta-D-manno-octulosonate + diphosphate. The protein operates within nucleotide-sugar biosynthesis; CMP-3-deoxy-D-manno-octulosonate biosynthesis; CMP-3-deoxy-D-manno-octulosonate from 3-deoxy-D-manno-octulosonate and CTP: step 1/1. Its pathway is bacterial outer membrane biogenesis; lipopolysaccharide biosynthesis. Its function is as follows. Activates KDO (a required 8-carbon sugar) for incorporation into bacterial lipopolysaccharide in Gram-negative bacteria. This chain is 3-deoxy-manno-octulosonate cytidylyltransferase, found in Synechococcus elongatus (strain ATCC 33912 / PCC 7942 / FACHB-805) (Anacystis nidulans R2).